Consider the following 634-residue polypeptide: Growth hormone receptor (634 aa).

The N-terminal stretch at 1–18 (MDLWQLLLTLAVAGSSDA) is a signal peptide. At 19–260 (FSGSEATPAF…NPSACEEDFQ (242 aa)) the chain is on the extracellular side. N-linked (GlcNAc...) asparagine glycosylation is present at Asn-46. The cysteines at positions 56 and 66 are disulfide-linked. An N-linked (GlcNAc...) asparagine glycan is attached at Asn-73. A disulfide bond links Cys-97 and Cys-108. Asn-111 carries an N-linked (GlcNAc...) asparagine glycan. Cys-122 and Cys-136 are joined by a disulfide. Residues 147 to 250 (PPVGLNWTLL…EVLLITFPQM (104 aa)) form the Fibronectin type-III domain. N-linked (GlcNAc...) asparagine glycosylation is found at Asn-152, Asn-157, and Asn-196. A WSXWS motif motif is present at residues 236 to 240 (YGKFS). A helical membrane pass occupies residues 261-284 (FPWFLIIIFGILGLAVTLYLLIFS). Over 285–634 (KQQRIKMLIL…STDQLNKIMP (350 aa)) the chain is Cytoplasmic. A required for JAK2 binding region spans residues 290–375 (KMLILPPVPV…HEKSLNIFGA (86 aa)). The short motif at 293 to 301 (ILPPVPVPK) is the Box 1 motif element. The UbE motif signature appears at 336 to 345 (DSWVEFIELD). Ser-337 bears the Phosphoserine mark.

It belongs to the type I cytokine receptor family. Type 1 subfamily. As to quaternary structure, on growth hormone (GH) binding, forms homodimers and binds JAK2 via a box 1-containing domain. In terms of processing, the soluble form (GHBP) is produced by phorbol ester-promoted proteolytic cleavage at the cell surface (shedding) by ADAM17/TACE. Shedding is inhibited by growth hormone (GH) binding to the receptor probably due to a conformational change in GHR rendering the receptor inaccessible to ADAM17. Post-translationally, on GH binding, phosphorylated on tyrosine residues in the cytoplasmic domain by JAK2. Ubiquitinated by the ECS(SOCS2) complex following ligand-binding and phosphorylation by JAK2, leading to its degradation by the proteasome. Regulation by the ECS(SOCS2) complex acts as a negative feedback loop of growth hormone receptor signaling. Ubiquitination is not sufficient for GHR internalization.

The protein localises to the cell membrane. The protein resides in the secreted. Its function is as follows. Receptor for pituitary gland growth hormone (GH1) involved in regulating postnatal body growth. On ligand binding, couples to the JAK2/STAT5 pathway. In terms of biological role, the soluble form (GHBP) acts as a reservoir of growth hormone in plasma and may be a modulator/inhibitor of GH signaling. The polypeptide is Growth hormone receptor (GHR) (Bos taurus (Bovine)).